The following is a 447-amino-acid chain: MTTFLSLTTAAAVLTLARGSNALVRPGNVGKLPALGWNSWNAFGCDIDAAKIMTAANEVVNLGLKDLGYEYINIDDCWSVKSGRDASTQRMVPDPEKFPDGISGLADQIHDLGLKVGIYSSAGLTTCAGYPASLGYEDIDAQTFAEWGIDYLKYDNCGVPSNWTDAYTYCVPDPGSKSTNGTCPDNKNPAPAGYDWRTSLTAERYRRMRDALVSVDRTILYSLCNWGQADVNDWGNETGNSWRTTGDITPSWPRIAAIANENSFLMNYVDFWGYPDPDMLEVGNGNLTLAENRAHFALWAAMKSPLIIGTALDSISQDHLAILSNKILLKFHQDPVVGRPAHPYKWGYNPDWTFDPAHPAEYWSGASSVLGGTLVLMLNSEDTKQRRTAVWKEIPELKDVLGRQGKRRTGFRVTDVWTGKDLGCVRDHYSVELESHDVAALVVGRAC.

The signal sequence occupies residues 1–22 (MTTFLSLTTAAAVLTLARGSNA). 2 cysteine pairs are disulfide-bonded: C45–C77 and C127–C157. The active-site Nucleophile is the D155. N162 and N180 each carry an N-linked (GlcNAc...) asparagine glycan. Residue 225-229 (NWGQA) participates in substrate binding. Residue N236 is glycosylated (N-linked (GlcNAc...) asparagine). The Proton donor role is filled by D247. N286 is a glycosylation site (N-linked (GlcNAc...) asparagine).

It belongs to the glycosyl hydrolase 27 family.

The protein resides in the secreted. It catalyses the reaction Hydrolysis of terminal, non-reducing alpha-D-galactose residues in alpha-D-galactosides, including galactose oligosaccharides, galactomannans and galactolipids.. Its function is as follows. Hydrolyzes a variety of simple alpha-D-galactoside as well as more complex molecules such as oligosaccharides and polysaccharides. The protein is Probable alpha-galactosidase B (aglB) of Neosartorya fischeri (strain ATCC 1020 / DSM 3700 / CBS 544.65 / FGSC A1164 / JCM 1740 / NRRL 181 / WB 181) (Aspergillus fischerianus).